Consider the following 448-residue polypeptide: Glutamyl-tRNA reductase (448 aa).

Substrate is bound by residues 49–52 (TCNR), S109, 114–116 (ETQ), and Q120. C50 functions as the Nucleophile in the catalytic mechanism. Residue 189 to 194 (GAGEMS) coordinates NADP(+).

Belongs to the glutamyl-tRNA reductase family. As to quaternary structure, homodimer.

It carries out the reaction (S)-4-amino-5-oxopentanoate + tRNA(Glu) + NADP(+) = L-glutamyl-tRNA(Glu) + NADPH + H(+). Its pathway is porphyrin-containing compound metabolism; protoporphyrin-IX biosynthesis; 5-aminolevulinate from L-glutamyl-tRNA(Glu): step 1/2. Its function is as follows. Catalyzes the NADPH-dependent reduction of glutamyl-tRNA(Glu) to glutamate 1-semialdehyde (GSA). The chain is Glutamyl-tRNA reductase from Staphylococcus aureus (strain NCTC 8325 / PS 47).